The primary structure comprises 363 residues: D(1) dopamine receptor (363 aa).

The Extracellular portion of the chain corresponds to 1-24 (MAVLDLNLTTVIDSGFMESDRSVR). N-linked (GlcNAc...) asparagine glycosylation is present at Asn-7. Residues 25-45 (VLTGCFLSVLILSTLLGNTLV) form a helical membrane-spanning segment. The Cytoplasmic segment spans residues 46 to 61 (CAAVTKFRHLRSKVTN). A helical membrane pass occupies residues 62 to 81 (FFVISLAVSDLLVAVLVMPW). Residues 82-98 (KAVTEVAGFWPFGAFCD) lie on the Extracellular side of the membrane. Residues Cys-97 and Cys-187 are joined by a disulfide bond. A helical transmembrane segment spans residues 99-120 (IWVAFDIMCSTASILNLCVISV). Over 121 to 139 (DRYWAISSPFRYERKMTPR) the chain is Cytoplasmic. The helical transmembrane segment at 140–164 (VAFVMISGAWTLSVLISFIPVQLKW) threads the bilayer. The Extracellular segment spans residues 165–194 (HKAQPIGFLEVNASRRDLPTDNCDSSLNRT). A helical membrane pass occupies residues 195–219 (YAISSSLISFYIPVAIMIVTYTQIY). Residues 220-271 (RIAQKQIRRISALERAAESAQIRHDSMGSGSNMDLESSFKLSFKRETKVLKT) are Cytoplasmic-facing. Residues 272-297 (LSVIMGVFVCCWLPFFILNCMVPFCK) form a helical membrane-spanning segment. Topologically, residues 298–310 (RTSNGLPCISPTT) are extracellular. A helical transmembrane segment spans residues 311-330 (FDVFVWFGWANSSLNPIIYA). The Cytoplasmic portion of the chain corresponds to 331 to 363 (FNADFRRAFAILLGCQRLCPGSISMETPSLNKN). Residue Cys-345 is the site of S-palmitoyl cysteine attachment.

The protein belongs to the G-protein coupled receptor 1 family. In terms of tissue distribution, retina.

The protein localises to the cell membrane. The protein resides in the cell projection. It is found in the cilium membrane. In terms of biological role, dopamine receptor whose activity is mediated by G proteins which activate adenylyl cyclase. Could be involved in growth hormone release. This chain is D(1) dopamine receptor, found in Carassius auratus (Goldfish).